A 103-amino-acid chain; its full sequence is Histone H4, major (103 aa).

Positions 1-12 (MAGGKGGKGMGK) are enriched in gly residues. The tract at residues 1–29 (MAGGKGGKGMGKVGAKRHSKRSNKASIEG) is disordered. N6-acetyllysine occurs at positions 5, 8, 12, and 16. The segment covering 14–23 (GAKRHSKRSN) has biased composition (basic residues). Residues 16-21 (KRHSKR) mediate DNA binding.

It belongs to the histone H4 family. As to quaternary structure, the nucleosome is a histone octamer containing two molecules each of H2A, H2B, H3 and H4 assembled in one H3-H4 heterotetramer and two H2A-H2B heterodimers. The octamer wraps approximately 147 bp of DNA.

Its subcellular location is the nucleus. It localises to the chromosome. Its function is as follows. Core component of nucleosome. Nucleosomes wrap and compact DNA into chromatin, limiting DNA accessibility to the cellular machineries which require DNA as a template. Histones thereby play a central role in transcription regulation, DNA repair, DNA replication and chromosomal stability. DNA accessibility is regulated via a complex set of post-translational modifications of histones, also called histone code, and nucleosome remodeling. The sequence is that of Histone H4, major from Tetrahymena pyriformis.